Reading from the N-terminus, the 461-residue chain is tRNA modification GTPase MnmE (461 aa).

Positions 27, 89, and 128 each coordinate (6S)-5-formyl-5,6,7,8-tetrahydrofolate. Residues 224–382 form the TrmE-type G domain; that stretch reads GLATAIVGQP…LEELINKLFF (159 aa). Asn234 provides a ligand contact to K(+). GTP is bound by residues 234 to 239, 253 to 259, and 278 to 281; these read NVGKSS, TDVAGTT, and DTAG. Mg(2+) is bound at residue Ser238. K(+) contacts are provided by Thr253, Val255, and Thr258. A Mg(2+)-binding site is contributed by Thr259. A (6S)-5-formyl-5,6,7,8-tetrahydrofolate-binding site is contributed by Lys461.

This sequence belongs to the TRAFAC class TrmE-Era-EngA-EngB-Septin-like GTPase superfamily. TrmE GTPase family. As to quaternary structure, homodimer. Heterotetramer of two MnmE and two MnmG subunits. The cofactor is K(+).

The protein localises to the cytoplasm. In terms of biological role, exhibits a very high intrinsic GTPase hydrolysis rate. Involved in the addition of a carboxymethylaminomethyl (cmnm) group at the wobble position (U34) of certain tRNAs, forming tRNA-cmnm(5)s(2)U34. The polypeptide is tRNA modification GTPase MnmE (Lactobacillus acidophilus (strain ATCC 700396 / NCK56 / N2 / NCFM)).